The sequence spans 874 residues: Pentatricopeptide repeat-containing protein At2g17140 (874 aa).

19 PPR repeats span residues 111 to 145 (SVYL…GIAP), 146 to 180 (QTYT…GCKP), 181 to 215 (NEFT…GVLP), 216 to 250 (NKVI…GLVP), 251 to 285 (DIVT…EYLG), 290 to 320 (NSIT…IREN), 325 to 359 (SLQS…GIGP), 360 to 394 (SIYS…GVCP), 395 to 429 (DAVT…NCLP), 430 to 464 (NAYT…GYGL), 465 to 499 (DTVT…GSAA), 523 to 557 (DLIT…KLQP), 558 to 592 (DSVA…GCHK), 593 to 627 (SLET…GISP), 628 to 662 (NICT…NIAP), 663 to 693 (NVFS…AVSI), 697 to 731 (KEGL…GFEL), 732 to 766 (GTFL…GYGF), and 767 to 797 (DPAA…MMEM).

The protein belongs to the PPR family. P subfamily.

The polypeptide is Pentatricopeptide repeat-containing protein At2g17140 (Arabidopsis thaliana (Mouse-ear cress)).